Consider the following 203-residue polypeptide: Outer-membrane lipoprotein carrier protein (203 aa).

The signal sequence occupies residues Met-1 to Ala-21.

This sequence belongs to the LolA family. Monomer.

Its subcellular location is the periplasm. Participates in the translocation of lipoproteins from the inner membrane to the outer membrane. Only forms a complex with a lipoprotein if the residue after the N-terminal Cys is not an aspartate (The Asp acts as a targeting signal to indicate that the lipoprotein should stay in the inner membrane). The sequence is that of Outer-membrane lipoprotein carrier protein from Photorhabdus laumondii subsp. laumondii (strain DSM 15139 / CIP 105565 / TT01) (Photorhabdus luminescens subsp. laumondii).